A 230-amino-acid chain; its full sequence is UPF0173 metal-dependent hydrolase TM1040_1920 (230 aa).

Belongs to the UPF0173 family.

This Ruegeria sp. (strain TM1040) (Silicibacter sp.) protein is UPF0173 metal-dependent hydrolase TM1040_1920.